The sequence spans 500 residues: ERAD-associated E3 ubiquitin-protein ligase HRD1 (500 aa).

Topologically, residues 1–3 (MIR) are cytoplasmic. A helical transmembrane segment spans residues 4–24 (LQTYAAFSLMATATAVYYAFS). The Lumenal segment spans residues 25 to 40 (SREQFYPAMVYLSTSK). Residues 41–61 (ICFVLLLNTGLVAMCVAWQLV) traverse the membrane as a helical segment. The Cytoplasmic segment spans residues 62–98 (KRLFLGTLREAEVERLNEQAWREVVEILFAVTIFRQD). The chain crosses the membrane as a helical span at residues 99 to 119 (FSVSFLAMVAALLLVKALHWL). Topologically, residues 120-135 (AQKRVEYIETTPSVPM) are lumenal. A helical membrane pass occupies residues 136-156 (LSHARIVSFMLFLLVVDCLFL). Over 157 to 170 (SNSLRSLIHKREAS) the chain is Cytoplasmic. Residues 171 to 191 (VAIFFSFEYMILATSTVSTFV) traverse the membrane as a helical segment. Residues 192–225 (KYIFYVSDMLMEGQWEKKAVYTFYLELISDLVHL) are Lumenal-facing. The helical transmembrane segment at 226–246 (SLYMLFFIAIFLNYGVPLHLI) threads the bilayer. Over 247–500 (RELYETFRNF…NENGEHTKSD (254 aa)) the chain is Cytoplasmic. The RING-type; atypical zinc finger occupies 292 to 330 (CIICREEMTTAKKLLCGHLFHVHCLRSWLERQHTCPTCR). 2 disordered regions span residues 337 to 375 (DNGRTAARPHGVHPGVQPVPGNGTPGSERAAGENISRRQ) and 398 to 438 (NNLN…SAPT). Positions 348 to 358 (VHPGVQPVPGN) are enriched in low complexity. Polar residues predominate over residues 398–426 (NNLNRYSTPPQSTSNGPQSGEASTSNQSP).

This sequence belongs to the HRD1 family.

The protein resides in the endoplasmic reticulum membrane. It catalyses the reaction S-ubiquitinyl-[E2 ubiquitin-conjugating enzyme]-L-cysteine + [acceptor protein]-L-lysine = [E2 ubiquitin-conjugating enzyme]-L-cysteine + N(6)-ubiquitinyl-[acceptor protein]-L-lysine.. It participates in protein modification; protein ubiquitination. Functionally, probable component of the HRD1 ubiquitin ligase complex that mediates the rapid degradation of misfolded endoplasmic reticulum (ER) proteins, a process called ER-associated degradation (ERAD). The sequence is that of ERAD-associated E3 ubiquitin-protein ligase HRD1 from Oryza sativa subsp. japonica (Rice).